We begin with the raw amino-acid sequence, 202 residues long: Cytochrome c oxidase assembly protein CtaG (202 aa).

The Cytoplasmic segment spans residues 1–14; sequence MSDKAAAPRKQGRN. A helical; Signal-anchor for type II membrane protein membrane pass occupies residues 15–37; sequence NGAVVMMCLSFVFGMGAMSYAAV. Residues 38 to 202 are Periplasmic-facing; sequence PLYRIFCQVT…GGTVKIEKKL (165 aa).

It belongs to the COX11/CtaG family.

It localises to the cell inner membrane. Exerts its effect at some terminal stage of cytochrome c oxidase synthesis, probably by being involved in the insertion of the copper B into subunit I. This chain is Cytochrome c oxidase assembly protein CtaG, found in Rhizobium etli (strain ATCC 51251 / DSM 11541 / JCM 21823 / NBRC 15573 / CFN 42).